A 1881-amino-acid chain; its full sequence is Endoribonuclease Dicer-S (1881 aa).

The Helicase ATP-binding domain maps to 41–217; sequence LLEAALDHNI…DLEEKIQNLE (177 aa). 54–61 serves as a coordination point for ATP; sequence LNSGSGKT. Positions 165–168 match the DECH box motif; sequence DECH. Positions 425–594 constitute a Helicase C-terminal domain; sequence SFPSPFTNIL…SMDCGNTESE (170 aa). One can recognise a Dicer dsRNA-binding fold domain in the interval 622–714; that stretch reads AIGHINRYCA…MPVGKETVKY (93 aa). Residues 887 to 1034 form the PAZ domain; sequence KFVEDIEKSE…LVPELCAIHP (148 aa). 2 RNase III domains span residues 1249-1380 and 1625-1783; these read TSDI…ETSG and FENF…MDSG. 6 residues coordinate Mg(2+): glutamate 1293, aspartate 1371, glutamate 1374, glutamate 1664, aspartate 1769, and glutamate 1772. A DRBM domain is found at 1808–1873; the sequence is VPRSPVRELL…ARRALRSLKA (66 aa).

Belongs to the helicase family. Dicer subfamily. Component of the RISC loading complex (RLC), or micro-RNA (miRNA) loading complex (miRLC), which is composed of dicer1, ago2 and tarbp2; dicer1 and tarbp2 are required to process precursor miRNAs (pre-miRNAs) to mature miRNAs and then load them onto ago2. Note that the trimeric RLC/miRLC is also referred to as RISC. It depends on Mg(2+) as a cofactor. The cofactor is Mn(2+).

The protein resides in the cytoplasm. It catalyses the reaction Endonucleolytic cleavage to 5'-phosphomonoester.. In terms of biological role, double-stranded RNA (dsRNA) endoribonuclease playing a central role in short dsRNA-mediated post-transcriptional gene silencing. Cleaves naturally occurring long dsRNAs and short hairpin pre-microRNAs (miRNA) into fragments of twenty-one to twenty-three nucleotides with 3' overhang of two nucleotides, producing respectively short interfering RNAs (siRNA) and mature microRNAs. SiRNAs and miRNAs serve as guide to direct the RNA-induced silencing complex (RISC) to complementary RNAs to degrade them or prevent their translation. Gene silencing mediated by siRNAs, also called RNA interference, controls the elimination of transcripts from mobile and repetitive DNA elements of the genome but also the degradation of exogenous RNA of viral origin for instance. The miRNA pathway on the other side is a mean to specifically regulate the expression of target genes. During embryonic development, at the left-right organizer, post-transcriptionally regulates the expression of dand5 in flow sensor cells. In post-flow stages, acts along with Bicc1 to repress dand5 mRNA translation and decay. Decreased Dand5 expression lifts repression of Nodal and defines leftness by induction of the lateral plate mesoderm Nodal signaling cascade. The chain is Endoribonuclease Dicer-S (dicer1.S) from Xenopus laevis (African clawed frog).